A 179-amino-acid chain; its full sequence is MSDVVLELPSDLRHELKEPLGRIYTDTAALLADAGDPIIAVGDMVTYHLIEAGRTPDLALVDERTERSAVDADVAAAIDGFDRTLSVDNPAATLTADLLAALRDGLDSDETTLLDVDGEEDLATLPAVLAAPAGASVVYGQPDEGMVLADCDDTARDRVRSLLERMDGDAERAIALVSN.

5 residues coordinate GTP: Asp-43, Val-45, Asp-62, Glu-120, and Asp-143.

It belongs to the GTP-dependent DPCK family.

The catalysed reaction is 3'-dephospho-CoA + GTP = GDP + CoA + H(+). It functions in the pathway cofactor biosynthesis; coenzyme A biosynthesis. Its function is as follows. Catalyzes the GTP-dependent phosphorylation of the 3'-hydroxyl group of dephosphocoenzyme A to form coenzyme A (CoA). The polypeptide is GTP-dependent dephospho-CoA kinase (Haloarcula marismortui (strain ATCC 43049 / DSM 3752 / JCM 8966 / VKM B-1809) (Halobacterium marismortui)).